Consider the following 277-residue polypeptide: Ubiquinone biosynthesis protein COQ4, mitochondrial (277 aa).

Residues 1-14 (MLTKRALRTTDPYR) constitute a mitochondrion transit peptide. Zn(2+) is bound by residues His157, Asp158, His161, and Glu173.

It belongs to the COQ4 family. As to quaternary structure, component of a multi-subunit COQ enzyme complex, composed of at least COQ3, COQ4, COQ5, COQ6, COQ7 and COQ9. Zn(2+) is required as a cofactor.

The protein localises to the mitochondrion inner membrane. It carries out the reaction a 4-hydroxy-3-methoxy-5-(all-trans-polyprenyl)benzoate + H(+) = a 2-methoxy-6-(all-trans-polyprenyl)phenol + CO2. Its pathway is cofactor biosynthesis; ubiquinone biosynthesis. Its function is as follows. Lyase that catalyzes the C1-decarboxylation of 4-hydroxy-3-methoxy-5-(all-trans-polyprenyl)benzoic acid into 2-methoxy-6-(all-trans-polyprenyl)phenol during ubiquinone biosynthesis. This chain is Ubiquinone biosynthesis protein COQ4, mitochondrial, found in Ajellomyces capsulatus (strain G186AR / H82 / ATCC MYA-2454 / RMSCC 2432) (Darling's disease fungus).